The sequence spans 112 residues: UPF0060 membrane protein Mpe_A1656 (112 aa).

The next 4 helical transmembrane spans lie at 9–29, 34–54, 65–85, and 91–111; these read GLFF…WLVL, SAWL…LLTL, AYGG…DGVV, and LVGG…PRAA.

It belongs to the UPF0060 family.

Its subcellular location is the cell inner membrane. The sequence is that of UPF0060 membrane protein Mpe_A1656 from Methylibium petroleiphilum (strain ATCC BAA-1232 / LMG 22953 / PM1).